The chain runs to 117 residues: Photosystem II reaction center Psb28 protein (117 aa).

Belongs to the Psb28 family. In terms of assembly, part of the photosystem II complex.

The protein resides in the cellular thylakoid membrane. The polypeptide is Photosystem II reaction center Psb28 protein (Prochlorococcus marinus (strain MIT 9215)).